The primary structure comprises 68 residues: Cytochrome c3 (68 aa).

Residues His-17, His-20, Cys-26, Cys-29, His-30, His-45, Cys-49, Cys-52, His-53, Cys-62, Cys-65, and His-66 each coordinate heme.

In terms of processing, binds 3 heme groups per subunit.

Participates in sulfate respiration coupled with phosphorylation by transferring electrons from the enzyme dehydrogenase to ferredoxin. The protein is Cytochrome c3 (cyd) of Desulfuromonas acetoxidans (Chloropseudomonas ethylica).